A 225-amino-acid chain; its full sequence is MNSPIDKLERKLGYQFKDAGLINLALTHRSANSKHNERLEFLGDSILSFVIADDLYHRFPKVNEGDMSRMRATLVRGHTLAELGREFDLGDYLKLGPGELKSGGFRRDSILADAVEAIIGAIYLDSDIEKVRSIVLSWYNSRLEAIKPGVSQKDPKTRLQEFLQGRRKPLPVYTVTNIKGEAHNQEFTVECEVAGVDKPVIGKGTSRRKAEQAAAETALEQLTNG.

An RNase III domain is found at 5-127 (IDKLERKLGY…IIGAIYLDSD (123 aa)). E40 provides a ligand contact to Mg(2+). D44 is a catalytic residue. 2 residues coordinate Mg(2+): D113 and E116. E116 is an active-site residue. Positions 154–224 (DPKTRLQEFL…AETALEQLTN (71 aa)) constitute a DRBM domain. Positions 204–225 (GTSRRKAEQAAAETALEQLTNG) are disordered. The span at 212 to 225 (QAAAETALEQLTNG) shows a compositional bias: low complexity.

Belongs to the ribonuclease III family. Homodimer. Mg(2+) is required as a cofactor.

It is found in the cytoplasm. It catalyses the reaction Endonucleolytic cleavage to 5'-phosphomonoester.. Digests double-stranded RNA. Involved in the processing of primary rRNA transcript to yield the immediate precursors to the large and small rRNAs (23S and 16S). Processes some mRNAs, and tRNAs when they are encoded in the rRNA operon. Processes pre-crRNA and tracrRNA of type II CRISPR loci if present in the organism. This chain is Ribonuclease 3, found in Vibrio parahaemolyticus serotype O3:K6 (strain RIMD 2210633).